Reading from the N-terminus, the 175-residue chain is Thioredoxin-like protein CITRX, chloroplastic (175 aa).

Residues 1-64 (MQAASLAFHP…KPPAVGKYVR (64 aa)) constitute a chloroplast transit peptide. The 102-residue stretch at 74–175 (AKEIQELIKG…MMRDIIDNDL (102 aa)) folds into the Thioredoxin domain. Catalysis depends on nucleophile residues Cys-98 and Cys-101. Cys-98 and Cys-101 are disulfide-bonded.

It belongs to the thioredoxin family. Plant CITRX-type subfamily. As to quaternary structure, interacts with Cf-9 resistance protein.

Its subcellular location is the plastid. It localises to the chloroplast. Probable thiol-disulfide oxidoreductase that may play a role in proper chloroplast development. This chain is Thioredoxin-like protein CITRX, chloroplastic, found in Solanum lycopersicum (Tomato).